A 165-amino-acid polypeptide reads, in one-letter code: Destrin (165 aa).

An N-acetylalanine modification is found at alanine 2. Residues glycine 4–glycine 153 form the ADF-H domain. The Nuclear localization signal signature appears at lysine 30 to lysine 34.

It belongs to the actin-binding proteins ADF family.

Its function is as follows. Actin-depolymerizing protein. Severs actin filaments (F-actin) and binds to actin monomers (G-actin). Acts in a pH-independent manner. The sequence is that of Destrin (DSTN) from Gallus gallus (Chicken).